We begin with the raw amino-acid sequence, 147 residues long: Urease accessory protein UreE (147 aa).

Belongs to the UreE family.

Its subcellular location is the cytoplasm. Involved in urease metallocenter assembly. Binds nickel. Probably functions as a nickel donor during metallocenter assembly. This Nostoc sp. (strain PCC 7120 / SAG 25.82 / UTEX 2576) protein is Urease accessory protein UreE.